A 197-amino-acid polypeptide reads, in one-letter code: Phosphoheptose isomerase (197 aa).

One can recognise an SIS domain in the interval 34 to 196 (MVQCLLGGNK…DRTLFPQDEQ (163 aa)). Substrate is bound at residue 49–51 (NGG). Zn(2+) is bound by residues histidine 58 and glutamate 62. Residues glutamate 62, 91–92 (ND), 117–119 (STS), serine 122, and glutamine 172 contribute to the substrate site. 2 residues coordinate Zn(2+): glutamine 172 and histidine 180.

Belongs to the SIS family. GmhA subfamily. As to quaternary structure, homotetramer. Zn(2+) is required as a cofactor.

It is found in the cytoplasm. It catalyses the reaction 2 D-sedoheptulose 7-phosphate = D-glycero-alpha-D-manno-heptose 7-phosphate + D-glycero-beta-D-manno-heptose 7-phosphate. It functions in the pathway carbohydrate biosynthesis; D-glycero-D-manno-heptose 7-phosphate biosynthesis; D-glycero-alpha-D-manno-heptose 7-phosphate and D-glycero-beta-D-manno-heptose 7-phosphate from sedoheptulose 7-phosphate: step 1/1. In terms of biological role, catalyzes the isomerization of sedoheptulose 7-phosphate in D-glycero-D-manno-heptose 7-phosphate. This Shewanella piezotolerans (strain WP3 / JCM 13877) protein is Phosphoheptose isomerase.